The following is a 682-amino-acid chain: K(+)-insensitive pyrophosphate-energized proton pump 2 (682 aa).

5 consecutive transmembrane segments (helical) span residues 1–21 (MELF…ALYM), 56–76 (TIAG…RQYH), 78–98 (AVAF…GMYV), 130–150 (LAVT…FGGA), and 160–180 (IVGF…SGGI). Position 183 (lysine 183) interacts with substrate. The Mg(2+) site is built by aspartate 186, aspartate 190, and aspartate 216. 7 consecutive transmembrane segments (helical) span residues 237–257 (IGAM…GIVF), 258–278 (PLVA…FVRA), 291–311 (GYIV…RYML), 318–338 (FIYF…FVLI), 353–373 (IARA…AVGF), 375–395 (STAL…WLGL), and 404–424 (LYGT…ILAM). Aspartate 432 lines the Mg(2+) pocket. The next 4 membrane-spanning stretches (helical) occupy residues 468-488 (YAIG…IDEV), 506-526 (EVFV…STAI), 574-594 (MVLP…VLKA), and 595-615 (EAAA…ALFL). Residues aspartate 623, aspartate 649, and aspartate 653 each contribute to the Ca(2+) site. Lysine 656 lines the substrate pocket. The helical transmembrane segment at 662–682 (SLHVLVKLISTITLVLAGLFI) threads the bilayer.

It belongs to the H(+)-translocating pyrophosphatase (TC 3.A.10) family. K(+)-insensitive subfamily. Homodimer. Mg(2+) is required as a cofactor.

Its subcellular location is the cell membrane. The catalysed reaction is diphosphate + H2O + H(+)(in) = 2 phosphate + 2 H(+)(out). Proton pump that utilizes the energy of pyrophosphate hydrolysis as the driving force for proton movement across the membrane. Generates a proton motive force. This is K(+)-insensitive pyrophosphate-energized proton pump 2 from Moorella thermoacetica (strain ATCC 39073 / JCM 9320).